Reading from the N-terminus, the 623-residue chain is ATP-dependent lipid A-core flippase (623 aa).

The next 5 helical transmembrane spans lie at 66 to 86, 103 to 123, 190 to 210, 290 to 310, and 317 to 337; these read LVLA…LAVI, VWFL…CNFF, LVVI…TLII, LTPL…AVAL, and ALTV…FDPI. Residues 67-349 enclose the ABC transmembrane type-1 domain; that stretch reads VLAVLLMAGA…LTNLAGKMQK (283 aa). One can recognise an ABC transporter domain in the interval 382-618; that stretch reads VEFRAVSHRF…NGLYASLYNM (237 aa). 416–423 contributes to the ATP binding site; it reads GRSGSGKT.

It belongs to the ABC transporter superfamily. Lipid exporter (TC 3.A.1.106) family. Homodimer.

It localises to the cell inner membrane. It catalyses the reaction ATP + H2O + lipid A-core oligosaccharideSide 1 = ADP + phosphate + lipid A-core oligosaccharideSide 2.. Its function is as follows. Involved in lipopolysaccharide (LPS) biosynthesis. Translocates lipid A-core from the inner to the outer leaflet of the inner membrane. Transmembrane domains (TMD) form a pore in the inner membrane and the ATP-binding domain (NBD) is responsible for energy generation. The protein is ATP-dependent lipid A-core flippase of Bordetella pertussis (strain Tohama I / ATCC BAA-589 / NCTC 13251).